Consider the following 622-residue polypeptide: Low affinity potassium transport system protein Kup (622 aa).

The next 12 helical transmembrane spans lie at 9–29, 49–69, 103–123, 137–157, 165–185, 213–233, 247–267, 276–296, 337–357, 363–383, 396–416, and 419–439; these read LPAI…TSPL, VFGF…IKYL, VIMG…TPAI, PQLD…LFMI, VGKL…GLGL, VSFI…ALYA, WFTV…ALLL, PFFL…AALA, IYIP…IVSF, LAAA…ILST, FVAL…TANL, and LLSG…VMTT.

The protein belongs to the HAK/KUP transporter (TC 2.A.72) family.

It is found in the cell inner membrane. The enzyme catalyses K(+)(in) + H(+)(in) = K(+)(out) + H(+)(out). In terms of biological role, responsible for the low-affinity transport of potassium into the cell. Likely operates as a K(+):H(+) symporter. This is Low affinity potassium transport system protein Kup from Escherichia coli O157:H7.